Consider the following 156-residue polypeptide: Arginine repressor (156 aa).

It belongs to the ArgR family.

It is found in the cytoplasm. It functions in the pathway amino-acid biosynthesis; L-arginine biosynthesis [regulation]. Its function is as follows. Regulates arginine biosynthesis genes. This chain is Arginine repressor, found in Photobacterium profundum (strain SS9).